A 439-amino-acid chain; its full sequence is MNSAKATSLLFQGFRKNCLRLNRISFASGLINRFTVPARTYADEKVFVRKKPHVNIGTIGHVDHGKTTLTAAITKCLSDLGQASFMDYSQIDKAPEEKARGITISSAHVEYETANRHYAHVDCPGHADYIKNMITGAATMDGAIIVVSATDGQMPQTREHLLLARQVGVKQIVVYINKVDMVEPDMIELVEMEMRELLSEYGFDGDNTPIVSGSALCALEGREPEIGLNSITKLMEAVDSYITLPERKTDVPFLMAIEDVFSISGRGTVVTGRVERGTLKKGAEIEIVGYGSHLKTTVTGIEMFKKQLDAAVAGDNCGLLLRSIKREQLKRGMIVAQPGTVAPHQKFKASFYILTKEEGGRRTGFVDKYRPQLYSRTSDVTVELTHPDPNDSDKMVMPGDNVEMICTLIHPIVIEKGQRFTVREGGSTVGTALVTELLD.

The 196-residue stretch at 51 to 246 folds into the tr-type G domain; the sequence is KPHVNIGTIG…AVDSYITLPE (196 aa). Residues 60–67 are G1; the sequence is GHVDHGKT. Residue 60–67 coordinates GTP; the sequence is GHVDHGKT. The tract at residues 101–105 is G2; the sequence is GITIS. Positions 122 to 125 are G3; it reads DCPG. Residues 122 to 126 and 177 to 180 contribute to the GTP site; these read DCPGH and NKVD. The G4 stretch occupies residues 177-180; that stretch reads NKVD. The G5 stretch occupies residues 214 to 216; that stretch reads SAL.

Belongs to the TRAFAC class translation factor GTPase superfamily. Classic translation factor GTPase family. EF-Tu/EF-1A subfamily.

Its subcellular location is the mitochondrion. Its function is as follows. This protein promotes the GTP-dependent binding of aminoacyl-tRNA to the A-site of ribosomes during protein biosynthesis. The protein is Elongation factor Tu, mitochondrial (tuf1) of Schizosaccharomyces pombe (strain 972 / ATCC 24843) (Fission yeast).